A 261-amino-acid chain; its full sequence is Proteasome subunit alpha (261 aa).

Residues 242 to 261 (NEENKKEEENREETKEKQEE) are disordered.

It belongs to the peptidase T1A family. In terms of assembly, the 20S proteasome core is composed of 14 alpha and 14 beta subunits that assemble into four stacked heptameric rings, resulting in a barrel-shaped structure. The two inner rings, each composed of seven catalytic beta subunits, are sandwiched by two outer rings, each composed of seven alpha subunits. The catalytic chamber with the active sites is on the inside of the barrel. Has a gated structure, the ends of the cylinder being occluded by the N-termini of the alpha-subunits. Is capped at one or both ends by the proteasome regulatory ATPase, PAN.

It localises to the cytoplasm. The formation of the proteasomal ATPase PAN-20S proteasome complex, via the docking of the C-termini of PAN into the intersubunit pockets in the alpha-rings, triggers opening of the gate for substrate entry. Interconversion between the open-gate and close-gate conformations leads to a dynamic regulation of the 20S proteasome proteolysis activity. Functionally, component of the proteasome core, a large protease complex with broad specificity involved in protein degradation. The M.jannaschii proteasome is able to cleave oligopeptides after Glu, Asp, Tyr, Phe, Trp, slightly after Arg, but not after Ala. Thus, displays caspase-like and chymotrypsin-like activities and low level of trypsin-like activity. The protein is Proteasome subunit alpha of Methanocaldococcus jannaschii (strain ATCC 43067 / DSM 2661 / JAL-1 / JCM 10045 / NBRC 100440) (Methanococcus jannaschii).